The sequence spans 427 residues: Sperm-associated antigen 1A (427 aa).

Positions 46 to 113 (QKKGPGYREG…GPGSAGESCN (68 aa)) are disordered. TPR repeat units follow at residues 125-158 (LARL…CIEA), 167-200 (CVLY…HPFS), 202-234 (KPLL…DISV), 302-335 (FTIL…KPNE), 336-369 (CAIY…EPKN), and 371-403 (KAFY…DPNV).

It is found in the cytoplasm. It localises to the dynein axonemal particle. In terms of biological role, may play a role in the cytoplasmic assembly and/or trafficking of the axonemal dynein arms. The sequence is that of Sperm-associated antigen 1A (spag1a) from Danio rerio (Zebrafish).